The primary structure comprises 159 residues: 2-C-methyl-D-erythritol 2,4-cyclodiphosphate synthase (159 aa).

The a divalent metal cation site is built by D10 and H12. Residues 10–12 (DVH) and 36–37 (HS) each bind 4-CDP-2-C-methyl-D-erythritol 2-phosphate. Residue H44 participates in a divalent metal cation binding. Residues 58 to 60 (DIG), 63 to 67 (FPDTD), 102 to 108 (AQVPKMA), 134 to 137 (TTTE), F141, and R144 each bind 4-CDP-2-C-methyl-D-erythritol 2-phosphate.

This sequence belongs to the IspF family. Homotrimer. The cofactor is a divalent metal cation.

It carries out the reaction 4-CDP-2-C-methyl-D-erythritol 2-phosphate = 2-C-methyl-D-erythritol 2,4-cyclic diphosphate + CMP. The protein operates within isoprenoid biosynthesis; isopentenyl diphosphate biosynthesis via DXP pathway; isopentenyl diphosphate from 1-deoxy-D-xylulose 5-phosphate: step 4/6. Its function is as follows. Involved in the biosynthesis of isopentenyl diphosphate (IPP) and dimethylallyl diphosphate (DMAPP), two major building blocks of isoprenoid compounds. Catalyzes the conversion of 4-diphosphocytidyl-2-C-methyl-D-erythritol 2-phosphate (CDP-ME2P) to 2-C-methyl-D-erythritol 2,4-cyclodiphosphate (ME-CPP) with a corresponding release of cytidine 5-monophosphate (CMP). In Shewanella woodyi (strain ATCC 51908 / MS32), this protein is 2-C-methyl-D-erythritol 2,4-cyclodiphosphate synthase.